A 140-amino-acid polypeptide reads, in one-letter code: MNTFKETLFSLKKSNYLLNESAQILNDCVVNNNEIDERLRNSIKFALGIINLASYCLKNEQEQLDHELNHGNEAPWEFSFNEAEQLIECTVKNNFGNEKLVDLIFHIGDAMETYRTTNIKFRVPKSYYDAKQQIRKVIKN.

This is an uncharacterized protein from Mycoplasma pneumoniae (strain ATCC 29342 / M129 / Subtype 1) (Mycoplasmoides pneumoniae).